Consider the following 213-residue polypeptide: NADH-quinone oxidoreductase subunit I (213 aa).

4Fe-4S ferredoxin-type domains are found at residues 74–103 (RFIESENERCIGCGLCEKICISNCIRMETS) and 113–142 (GNYSINLGRCIYCGFCAEVCPELAIVHGIE). Residues Cys-83, Cys-86, Cys-89, Cys-93, Cys-122, Cys-125, Cys-128, and Cys-132 each coordinate [4Fe-4S] cluster.

The protein belongs to the complex I 23 kDa subunit family. NDH-1 is composed of 14 different subunits. Subunits NuoA, H, J, K, L, M, N constitute the membrane sector of the complex. It depends on [4Fe-4S] cluster as a cofactor.

Its subcellular location is the cell inner membrane. It carries out the reaction a quinone + NADH + 5 H(+)(in) = a quinol + NAD(+) + 4 H(+)(out). Functionally, NDH-1 shuttles electrons from NADH, via FMN and iron-sulfur (Fe-S) centers, to quinones in the respiratory chain. The immediate electron acceptor for the enzyme in this species is believed to be ubiquinone. Couples the redox reaction to proton translocation (for every two electrons transferred, four hydrogen ions are translocated across the cytoplasmic membrane), and thus conserves the redox energy in a proton gradient. The chain is NADH-quinone oxidoreductase subunit I from Campylobacter jejuni subsp. doylei (strain ATCC BAA-1458 / RM4099 / 269.97).